Consider the following 434-residue polypeptide: Glutamate-1-semialdehyde 2,1-aminomutase (434 aa).

Position 274 is an N6-(pyridoxal phosphate)lysine (lysine 274).

The protein belongs to the class-III pyridoxal-phosphate-dependent aminotransferase family. HemL subfamily. As to quaternary structure, homodimer. Pyridoxal 5'-phosphate is required as a cofactor.

The protein resides in the cytoplasm. It carries out the reaction (S)-4-amino-5-oxopentanoate = 5-aminolevulinate. The protein operates within porphyrin-containing compound metabolism; protoporphyrin-IX biosynthesis; 5-aminolevulinate from L-glutamyl-tRNA(Glu): step 2/2. In Acidovorax sp. (strain JS42), this protein is Glutamate-1-semialdehyde 2,1-aminomutase.